The primary structure comprises 1076 residues: Nucleoporin NUP1 (1076 aa).

Over residues 1–11 (MSSNTSSVMSS) the composition is skewed to low complexity. The disordered stretch occupies residues 1 to 39 (MSSNTSSVMSSPRVEKRSFSSTLKSFFTNPNKKRPSSKK). Serine 2 is subject to N-acetylserine. The segment covering 19–30 (FSSTLKSFFTNP) has biased composition (polar residues). Serine 54 and serine 161 each carry phosphoserine. 2 disordered regions span residues 143–183 (SQSK…TNVG) and 224–260 (KKDN…ATGP). 2 stretches are compositionally biased toward polar residues: residues 154-170 (LCTS…SCTR) and 243-260 (NRNN…ATGP). The FXF 1 repeat unit spans residues 336–338 (FDF). The residue at position 381 (threonine 381) is a Phosphothreonine. Phosphoserine is present on serine 383. One copy of the FXF 2 repeat lies at 384–386 (FNF). The tract at residues 403–518 (TTLFNFGGKS…SFVFGASDKQ (116 aa)) is disordered. 2 FXFG repeats span residues 406-409 (FNFG) and 422-425 (FKFG). A compositionally biased stretch (basic and acidic residues) spans 426 to 439 (KTSEKSENHTESDA). FXFG repeat units lie at residues 448–451 (FSFG) and 484–487 (FDFG). Positions 488 to 505 (KTGDQKETKKGESEKDAS) are enriched in basic and acidic residues. 4 FXFG repeats span residues 510-513 (FVFG), 525-528 (FTFG), 543-546 (FTFG), and 571-574 (FTFG). Residues 548–743 (AATAKETHTK…SMKSTASTAA (196 aa)) are disordered. FXF repeat units follow at residues 591–593 (FSF), 614–616 (FSF), 636–638 (FSF), and 657–659 (FTF). 2 stretches are compositionally biased toward polar residues: residues 634–649 (PTFS…SSVV) and 658–667 (TFASSKTSQP). Phosphoserine is present on serine 637. The stretch at 671–674 (FSFG) is one FXFG 9 repeat. One copy of the FXF 7 repeat lies at 689-691 (FSF). 2 FXFG repeats span residues 708-711 (FTFG) and 727-730 (FSFG). The segment covering 708-723 (FTFGGSTTNNTTTTST) has biased composition (low complexity). The stretch at 753 to 755 (FSF) is one FXF 8 repeat. One copy of the FXFG 12 repeat lies at 800-803 (FSFG). FXF repeat units follow at residues 819 to 821 (FSF) and 866 to 868 (FGF). The FXFG 13 repeat unit spans residues 885–888 (FNFG). An FXF 11 repeat occupies 929-931 (FNF). The disordered stretch occupies residues 940 to 979 (GGSVFNMNGNTNANTVFAGSNNQPHQSQTPSFNTNSSFTP). A compositionally biased stretch (polar residues) spans 944 to 964 (FNMNGNTNANTVFAGSNNQPH). Low complexity predominate over residues 965 to 979 (QSQTPSFNTNSSFTP). 3 FG repeats span residues 1008-1009 (FG), 1027-1028 (FG), and 1038-1039 (FG). Residues 1025–1054 (SIFGGAGGVPTTSFGQPQSAPNQMGMGTNN) form a disordered region. Residues 1034–1045 (PTTSFGQPQSAP) show a composition bias toward polar residues. The tract at residues 1040–1076 (QPQSAPNQMGMGTNNGMSMGGGVMANRKIARMRHSKR) is interaction with KAP95.

As to quaternary structure, component of the nuclear pore complex (NPC). NPC constitutes the exclusive means of nucleocytoplasmic transport. NPCs allow the passive diffusion of ions and small molecules and the active, nuclear transport receptor-mediated bidirectional transport of macromolecules such as proteins, RNAs, ribonucleoparticles (RNPs), and ribosomal subunits across the nuclear envelope. Due to its 8-fold rotational symmetry, all subunits are present with 8 copies or multiples thereof. Interacts through its FG repeats with nuclear transport receptors. Binds to the nuclear basket of the NPC through NUP60. Interacts with KAP122. Post-translationally, phosphorylated by CDC28.

It localises to the nucleus. The protein localises to the nuclear pore complex. The protein resides in the nucleus membrane. Its function is as follows. Functions as a component of the nuclear pore complex (NPC). NPC components, collectively referred to as nucleoporins (NUPs), can play the role of both NPC structural components and of docking or interaction partners for transiently associated nuclear transport factors. Active directional transport is assured by both, a Phe-Gly (FG) repeat affinity gradient for these transport factors across the NPC and a transport cofactor concentration gradient across the nuclear envelope (GSP1 and GSP2 GTPases associated predominantly with GTP in the nucleus, with GDP in the cytoplasm). As one of the FG repeat nucleoporins NUP1 is involved in interactions with and guidance of nuclear transport receptors such as SRP1-KAP95 (importin alpha and beta) through the NPC. Like the closely related NUP2 it also plays an important role in disassembling and recycling SRP1-KAP95 to the cytoplasm after nuclear import. Upon entry of the heterotrimeric SRP1-KAP95-cargo complex in the nucleus, NUP1 binds through its C-terminus to KAP95, thus accelerating the release of KAP95 and, indirectly, of the nuclear localization signal (NLS)-containing cargo from the SRP1-KAP95-cargo complex. This is Nucleoporin NUP1 (NUP1) from Saccharomyces cerevisiae (strain ATCC 204508 / S288c) (Baker's yeast).